We begin with the raw amino-acid sequence, 118 residues long: MLSPKGAILIFFLTGFFLSIIILVLNYLLSPKSKSLIKRETYECGLETIGPTWVQFKGNYFMYALVFVLFDVETIFLYPWAVRFNVLGLFAFVEMVIFIGILVLGLWYAWKEGALEWK.

The next 3 helical transmembrane spans lie at 8-28 (ILIFFLTGFFLSIIILVLNYL), 61-81 (FMYALVFVLFDVETIFLYPWA), and 86-106 (VLGLFAFVEMVIFIGILVLGL).

This sequence belongs to the complex I subunit 3 family. As to quaternary structure, NDH-1 is composed of 14 different subunits. Subunits NuoA, H, J, K, L, M, N constitute the membrane sector of the complex.

It is found in the cell membrane. It catalyses the reaction a quinone + NADH + 5 H(+)(in) = a quinol + NAD(+) + 4 H(+)(out). Its function is as follows. NDH-1 shuttles electrons from NADH, via FMN and iron-sulfur (Fe-S) centers, to quinones in the respiratory chain. The immediate electron acceptor for the enzyme in this species is believed to be a menaquinone. Couples the redox reaction to proton translocation (for every two electrons transferred, four hydrogen ions are translocated across the cytoplasmic membrane), and thus conserves the redox energy in a proton gradient. This Carboxydothermus hydrogenoformans (strain ATCC BAA-161 / DSM 6008 / Z-2901) protein is NADH-quinone oxidoreductase subunit A.